Consider the following 550-residue polypeptide: Flagellin (550 aa).

The protein belongs to the bacterial flagellin family.

The protein localises to the secreted. The protein resides in the bacterial flagellum. Its function is as follows. Flagellin is the subunit protein which polymerizes to form the filaments of bacterial flagella. The chain is Flagellin (fliC) from Shigella flexneri.